Reading from the N-terminus, the 67-residue chain is MAVQQNRKSPSKRDMRRSHDALGFSTLSTDSKSGERHRRHHVTKDGFYRGKQVIVHPVESVEVDDEV.

Positions 1–44 (MAVQQNRKSPSKRDMRRSHDALGFSTLSTDSKSGERHRRHHVTK) are disordered. Positions 11–20 (SKRDMRRSHD) are enriched in basic and acidic residues.

Belongs to the bacterial ribosomal protein bL32 family.

The chain is Large ribosomal subunit protein bL32 from Dichelobacter nodosus (strain VCS1703A).